A 128-amino-acid chain; its full sequence is Small ribosomal subunit protein uS11 (128 aa).

Belongs to the universal ribosomal protein uS11 family. Part of the 30S ribosomal subunit. Interacts with proteins S7 and S18. Binds to IF-3.

Its function is as follows. Located on the platform of the 30S subunit, it bridges several disparate RNA helices of the 16S rRNA. Forms part of the Shine-Dalgarno cleft in the 70S ribosome. This Desulfatibacillum aliphaticivorans protein is Small ribosomal subunit protein uS11.